Here is a 316-residue protein sequence, read N- to C-terminus: 4-hydroxy-3-methylbut-2-enyl diphosphate reductase (316 aa).

Cys12 is a [4Fe-4S] cluster binding site. (2E)-4-hydroxy-3-methylbut-2-enyl diphosphate-binding residues include His43 and His81. 2 residues coordinate dimethylallyl diphosphate: His43 and His81. Residues His43 and His81 each contribute to the isopentenyl diphosphate site. Position 103 (Cys103) interacts with [4Fe-4S] cluster. His131 lines the (2E)-4-hydroxy-3-methylbut-2-enyl diphosphate pocket. His131 contacts dimethylallyl diphosphate. Position 131 (His131) interacts with isopentenyl diphosphate. Glu133 serves as the catalytic Proton donor. (2E)-4-hydroxy-3-methylbut-2-enyl diphosphate is bound at residue Thr170. Cys198 provides a ligand contact to [4Fe-4S] cluster. Residues Ser226, Asn228, and Ser271 each contribute to the (2E)-4-hydroxy-3-methylbut-2-enyl diphosphate site. 3 residues coordinate dimethylallyl diphosphate: Ser226, Asn228, and Ser271. Isopentenyl diphosphate contacts are provided by Ser226, Asn228, and Ser271.

Belongs to the IspH family. [4Fe-4S] cluster is required as a cofactor.

The catalysed reaction is isopentenyl diphosphate + 2 oxidized [2Fe-2S]-[ferredoxin] + H2O = (2E)-4-hydroxy-3-methylbut-2-enyl diphosphate + 2 reduced [2Fe-2S]-[ferredoxin] + 2 H(+). The enzyme catalyses dimethylallyl diphosphate + 2 oxidized [2Fe-2S]-[ferredoxin] + H2O = (2E)-4-hydroxy-3-methylbut-2-enyl diphosphate + 2 reduced [2Fe-2S]-[ferredoxin] + 2 H(+). It functions in the pathway isoprenoid biosynthesis; dimethylallyl diphosphate biosynthesis; dimethylallyl diphosphate from (2E)-4-hydroxy-3-methylbutenyl diphosphate: step 1/1. Its pathway is isoprenoid biosynthesis; isopentenyl diphosphate biosynthesis via DXP pathway; isopentenyl diphosphate from 1-deoxy-D-xylulose 5-phosphate: step 6/6. Its function is as follows. Catalyzes the conversion of 1-hydroxy-2-methyl-2-(E)-butenyl 4-diphosphate (HMBPP) into a mixture of isopentenyl diphosphate (IPP) and dimethylallyl diphosphate (DMAPP). Acts in the terminal step of the DOXP/MEP pathway for isoprenoid precursor biosynthesis. This Bacillus cereus (strain AH820) protein is 4-hydroxy-3-methylbut-2-enyl diphosphate reductase.